The following is a 122-amino-acid chain: Large ribosomal subunit protein eL34 (122 aa).

The protein belongs to the eukaryotic ribosomal protein eL34 family.

The chain is Large ribosomal subunit protein eL34 (rpl34) from Dictyostelium discoideum (Social amoeba).